The primary structure comprises 705 residues: CAP-Gly domain-containing linker protein 4 (705 aa).

3 ANK repeats span residues 65-101 (TSVS…NVND), 149-180 (TNMN…DVDA), and 186-215 (NFGT…NPAF). Residues 303–345 (GTTEFASGQWAGIELDEPEGKNNGSVGKVQYFKCAPKYGIFAP) enclose the CAP-Gly 1 domain. Disordered regions lie at residues 391 to 410 (MTSK…PGEE) and 431 to 479 (TSSL…ANNS). Residues 441–452 (PKKQNAISSNKK) are compositionally biased toward polar residues. Over residues 455–479 (SKSPSLSSRASAGLNSSATSTANNS) the composition is skewed to low complexity. A CAP-Gly 2 domain is found at 505 to 547 (GTTNFAPGYWYGIELEKPHGKNDGSVGGVQYFSCSPRYGIFAP). Residues S557 and S609 each carry the phosphoserine modification. The CAP-Gly 3 domain occupies 644-686 (GPTDFASGIWLGLELRSAKGKNDGSVGDKRYFTCKPNHGVLVR).

The polypeptide is CAP-Gly domain-containing linker protein 4 (CLIP4) (Homo sapiens (Human)).